A 348-amino-acid chain; its full sequence is WW domain binding protein 1-like (348 aa).

The helical transmembrane segment at 42-62 threads the bilayer; that stretch reads LWWFWLVWTVVIILSCCCVCH. 2 disordered regions span residues 111–253 and 306–348; these read VVNR…RRFT and CLSS…GSPS. Over residues 134 to 155 the composition is skewed to pro residues; that stretch reads LPPPPQGGPPGGSPPGADPPPQ. The segment covering 156-177 has biased composition (low complexity); it reads GSQGAQSSPLSGPSRSSTRPPS. Ser-177 carries the post-translational modification Phosphoserine. Over residues 220 to 234 the composition is skewed to basic and acidic residues; sequence SECKEELLKDSRSER. Positions 331–348 are enriched in polar residues; the sequence is NTINEQDSPNSQHSGSPS.

Its subcellular location is the membrane. In Mus musculus (Mouse), this protein is WW domain binding protein 1-like (Wbp1l).